A 303-amino-acid polypeptide reads, in one-letter code: ATP-dependent Clp protease ATP-binding subunit CLPT3, chloroplastic (303 aa).

Residues 1–37 (MLLANAPHNGCSRLQQVTLLRASGAKLHRKRALTVVA) constitute a chloroplast transit peptide. Disordered stretches follow at residues 185–214 (ASTE…RDSD) and 278–303 (RDDN…DEYE).

The protein belongs to the ClpA/ClpB family.

Its subcellular location is the plastid. It is found in the chloroplast. Functionally, accessory protein regulating the assembly of the plastid Clp protease system. In Chlamydomonas reinhardtii (Chlamydomonas smithii), this protein is ATP-dependent Clp protease ATP-binding subunit CLPT3, chloroplastic.